We begin with the raw amino-acid sequence, 60 residues long: Phospholipase A2 (60 aa).

Ca(2+) contacts are provided by Tyr-27, Gly-29, and Gly-31. Cys-28 and Cys-44 form a disulfide bridge. Residue His-47 is part of the active site. Asp-48 is a binding site for Ca(2+).

The cofactor is Ca(2+). As to expression, expressed by the venom gland.

Its subcellular location is the secreted. The catalysed reaction is a 1,2-diacyl-sn-glycero-3-phosphocholine + H2O = a 1-acyl-sn-glycero-3-phosphocholine + a fatty acid + H(+). Its function is as follows. Snake venom phospholipase A2 (PLA2) that displays mild but significant inhibition of mouse platelet aggregation induced by ADP and collagen. In vivo, induces edema in the foot pads and gastrocnemius muscles of mice but shows no myonecrotic or myotoxic activity. PA2 catalyzes the calcium-dependent hydrolysis of the 2-acyl groups in 3-sn-phosphoglycerides. The polypeptide is Phospholipase A2 (Lachesis muta rhombeata (Bushmaster)).